A 290-amino-acid polypeptide reads, in one-letter code: GTPase Era (290 aa).

The region spanning 2–169 is the Era-type G domain; the sequence is KSGFVSIIGR…KDKIYANLQE (168 aa). A G1 region spans residues 10–17; sequence GRPSTGKS. 10–17 is a binding site for GTP; sequence GRPSTGKS. The interval 36–40 is G2; that stretch reads QTTRN. The segment at 57 to 60 is G3; that stretch reads DTPG. GTP is bound by residues 57–61 and 119–122; these read DTPGF and NKID. Positions 119 to 122 are G4; sequence NKID. The interval 148–150 is G5; it reads ISA. In terms of domain architecture, KH type-2 spans 200-276; it reads LKEELPYSLY…DLFLQVKLRK (77 aa).

Belongs to the TRAFAC class TrmE-Era-EngA-EngB-Septin-like GTPase superfamily. Era GTPase family. As to quaternary structure, monomer.

The protein localises to the cytoplasm. It localises to the cell inner membrane. Its function is as follows. An essential GTPase that binds both GDP and GTP, with rapid nucleotide exchange. Plays a role in 16S rRNA processing and 30S ribosomal subunit biogenesis and possibly also in cell cycle regulation and energy metabolism. The protein is GTPase Era of Borrelia hermsii (strain HS1 / DAH).